Consider the following 280-residue polypeptide: MQNHVISLASAAERRAHIADTFGSRGIPFQFFDALMPSERLEQAMAELVPGLSAHPYLSGVEKACFMSHAVLWEQALDEGLPYIAVFEDDVLLGEGAEQFLAEDTWLEERFDKDSAFIVRLETMFAKVIVRPDKVLNYENRSFPLLESEHCGTAGYIISREAMRFFLDRFAVLPPERIKAVDLMMFTYFFDKEGMPVYQVSPALCTQELHYAKFLSQNSMLGSDLEKDREQGRRHRRSLKVMFDLKRALGKFGREKKKRMERQRQAELEKVYGRRVILFK.

This sequence belongs to the glycosyltransferase 25 family.

It participates in glycan metabolism; lacto-N-neotetraose biosynthesis. Its pathway is bacterial outer membrane biogenesis; lipooligosaccharide biosynthesis. Its function is as follows. Adds the first galactose to the lacto-N-tetraose chain in lipooligosaccharide (LOS). This chain is Lacto-N-neotetraose biosynthesis glycosyltransferase LgtE (lgtE), found in Neisseria gonorrhoeae.